Here is a 743-residue protein sequence, read N- to C-terminus: Dynein regulatory complex protein 1 homolog (743 aa).

2 stretches are compositionally biased toward acidic residues: residues 1–10 (MDDNEDELEE) and 19–28 (SVEEEEEVEP). The disordered stretch occupies residues 1 to 34 (MDDNEDELEEHQELVSDGSVEEEEEVEPDLGPVD). Coiled-coil stretches lie at residues 175–332 (DQIE…VLMN) and 395–416 (KLHS…NNRE). The segment at 599–620 (NRLQGAAGGQPDEKEHRSTGDT) is disordered. Residues 715 to 742 (KMRVQYDAEVVFLRRQNEELRHLLQKFT) adopt a coiled-coil conformation.

It belongs to the DRC1 family.

The polypeptide is Dynein regulatory complex protein 1 homolog (Drosophila melanogaster (Fruit fly)).